The sequence spans 338 residues: tRNA (cytosine(34)-C(5))-methyltransferase, mitochondrial (338 aa).

S-adenosyl-L-methionine contacts are provided by residues 140 to 146 (CAAPGGK), glutamate 163, aspartate 194, and aspartate 212. Cysteine 266 serves as the catalytic Nucleophile.

Belongs to the class I-like SAM-binding methyltransferase superfamily. RsmB/NOP family.

The protein resides in the mitochondrion matrix. The catalysed reaction is cytidine(34) in mitochondrial tRNA + S-adenosyl-L-methionine = 5-methylcytidine(34) in mitochondrial tRNA + S-adenosyl-L-homocysteine + H(+). Functionally, mitochondrial tRNA methyltransferase that mediates methylation of cytosine to 5-methylcytosine (m5C) at position 34 of mt-tRNA(Met). mt-tRNA(Met) methylation at cytosine(34) takes place at the wobble position of the anticodon and initiates the formation of 5-formylcytosine (f(5)c) at this position. mt-tRNA(Met) containing the f(5)c modification at the wobble position enables recognition of the AUA codon in addition to the AUG codon, expanding codon recognition in mitochondrial translation. This Bos taurus (Bovine) protein is tRNA (cytosine(34)-C(5))-methyltransferase, mitochondrial.